The following is a 66-amino-acid chain: Large ribosomal subunit protein bL33c (66 aa).

It belongs to the bacterial ribosomal protein bL33 family.

It localises to the plastid. The protein resides in the chloroplast. This chain is Large ribosomal subunit protein bL33c, found in Fagopyrum esculentum subsp. ancestrale (Wild buckwheat).